The chain runs to 108 residues: PTS system galactose-specific EIIB component (108 aa).

A PTS EIIB type-3 domain is found at 3–108 (DKVIALACAA…VLAAAENLMN (106 aa)). The active-site Phosphocysteine intermediate is the Cys-10. At Cys-10 the chain carries Phosphocysteine; by EIIA.

The catalysed reaction is N(pros)-phospho-L-histidyl-[protein] + D-galactose(out) = D-galactose 6-phosphate(in) + L-histidyl-[protein]. The phosphoenolpyruvate-dependent sugar phosphotransferase system (sugar PTS), a major carbohydrate active transport system, catalyzes the phosphorylation of incoming sugar substrates concomitantly with their translocation across the cell membrane. Involved in galactose transport with PtcA and Lmg_0963. This chain is PTS system galactose-specific EIIB component, found in Lactococcus lactis subsp. cremoris (strain MG1363).